The sequence spans 56 residues: Frontoxin I (56 aa).

Cystine bridges form between C3/C22, C17/C39, C41/C52, and C53/C56.

It belongs to the three-finger toxin family. Short-chain subfamily. Type I alpha-neurotoxin sub-subfamily. In terms of tissue distribution, expressed by the venom gland.

The protein localises to the secreted. Binds to muscle nicotinic acetylcholine receptor (nAChR) and inhibit acetylcholine from binding to the receptor, thereby impairing neuromuscular transmission. The protein is Frontoxin I of Micrurus frontalis (Coral snake).